The following is a 521-amino-acid chain: Cholesterol side-chain cleavage enzyme, mitochondrial (521 aa).

Residues 1-39 (MLAKGLPPRSVLVKGCQTFLSAPKERLGHLRVPTSEGAG) constitute a mitochondrion transit peptide. Cys462 lines the heme pocket.

This sequence belongs to the cytochrome P450 family. In terms of assembly, interacts with FDX1/adrenodoxin. It depends on heme as a cofactor.

The protein resides in the mitochondrion inner membrane. The catalysed reaction is 6 reduced [adrenodoxin] + cholesterol + 3 O2 + 6 H(+) = 4-methylpentanal + pregnenolone + 6 oxidized [adrenodoxin] + 4 H2O. It catalyses the reaction 2 reduced [adrenodoxin] + cholesterol + O2 + 2 H(+) = (22R)-hydroxycholesterol + 2 oxidized [adrenodoxin] + H2O. It carries out the reaction (22R)-hydroxycholesterol + 2 reduced [adrenodoxin] + O2 + 2 H(+) = (20R,22R)-20,22-dihydroxycholesterol + 2 oxidized [adrenodoxin] + H2O. The enzyme catalyses (20R,22R)-20,22-dihydroxycholesterol + 2 reduced [adrenodoxin] + O2 + 2 H(+) = 4-methylpentanal + pregnenolone + 2 oxidized [adrenodoxin] + 2 H2O. Its pathway is lipid metabolism; C21-steroid hormone metabolism. The protein operates within steroid metabolism; cholesterol metabolism. In terms of biological role, a cytochrome P450 monooxygenase that catalyzes the side-chain hydroxylation and cleavage of cholesterol to pregnenolone, the precursor of most steroid hormones. Catalyzes three sequential oxidation reactions of cholesterol, namely the hydroxylation at C22 followed with the hydroxylation at C20 to yield 20R,22R-hydroxycholesterol that is further cleaved between C20 and C22 to yield the C21-steroid pregnenolone and 4-methylpentanal. Mechanistically, uses molecular oxygen inserting one oxygen atom into a substrate and reducing the second into a water molecule. Two electrons are provided by NADPH via a two-protein mitochondrial transfer system comprising flavoprotein FDXR (adrenodoxin/ferredoxin reductase) and nonheme iron-sulfur protein FDX1 or FDX2 (adrenodoxin/ferredoxin). The polypeptide is Cholesterol side-chain cleavage enzyme, mitochondrial (CYP11A1) (Macaca fascicularis (Crab-eating macaque)).